Here is a 921-residue protein sequence, read N- to C-terminus: Inner nuclear membrane protein Man1 (921 aa).

In terms of domain architecture, LEM spans 7–51; it reads AAAPQQLSDEELFSQLRRYGLSPGPVTESTRPVYLKKLKKLREEE. S28 carries the phosphoserine modification. 3 disordered regions span residues 47–97, 136–357, and 374–395; these read LREE…AYLR, SSDE…GGCG, and LAPLLSPPSPDGDSTLESPTGP. 2 stretches are compositionally biased toward low complexity: residues 53-62 and 72-85; these read QQQQQQQQQQ and TRNSNNNNTATAMG. Residues S136, S137, and S140 each carry the phosphoserine modification. Positions 217-237 are enriched in acidic residues; that stretch reads AAEDADEELADGEDRDPEAEE. S261, S263, and S287 each carry phosphoserine. Residues 263–275 are compositionally biased toward acidic residues; that stretch reads SEEEEEEGEEDGD. Over residues 308–317 the composition is skewed to polar residues; it reads SGGSRQETSV. Positions 348 to 357 are enriched in gly residues; the sequence is PGGGGGGGCG. S412 carries the phosphoserine modification. 2 consecutive transmembrane segments (helical) span residues 486 to 506 and 637 to 657; these read MFLLTAACLFFLILGLTYLGM and AFITVTHRLLLLCLGVVLVCV. The interval 709-921 is interaction with SMAD1, SMAD2, SMAD3 and SMAD5; it reads VRDSLIQPQD…TGLANSQGSS (213 aa). A DNA-binding region spans residues 717 to 736; sequence QDRKKMKKVWDRAVDFLAAN. S787 is modified (phosphoserine). T893 carries the phosphothreonine modification. S921 carries the phosphoserine modification.

In terms of assembly, interacts with SMAD1, SMAD2, SMAD3 and SMAD5. Binds to both phosphorylated and unphosphorylated R-SMADS.

The protein resides in the nucleus inner membrane. Can function as a specific repressor of TGF-beta, activin, and BMP signaling through its interaction with the R-SMAD proteins. Antagonizes TGF-beta-induced cell proliferation arrest. This chain is Inner nuclear membrane protein Man1 (Lemd3), found in Mus musculus (Mouse).